We begin with the raw amino-acid sequence, 193 residues long: Ion-translocating oxidoreductase complex subunit A (193 aa).

6 consecutive transmembrane segments (helical) span residues 5–25, 47–67, 72–92, 102–122, 134–154, and 171–191; these read LLLF…FLGL, FVMT…LIPL, LRTM…EMVV, LLGI…VALL, ALYG…FAAI, and AIAL…SGLV.

It belongs to the NqrDE/RnfAE family. As to quaternary structure, the complex is composed of six subunits: RsxA, RsxB, RsxC, RsxD, RsxE and RsxG.

The protein resides in the cell inner membrane. Its function is as follows. Part of a membrane-bound complex that couples electron transfer with translocation of ions across the membrane. Required to maintain the reduced state of SoxR. This is Ion-translocating oxidoreductase complex subunit A from Escherichia coli O45:K1 (strain S88 / ExPEC).